The following is a 103-amino-acid chain: Small ribosomal subunit protein uS10 (103 aa).

This sequence belongs to the universal ribosomal protein uS10 family. Part of the 30S ribosomal subunit.

In terms of biological role, involved in the binding of tRNA to the ribosomes. The polypeptide is Small ribosomal subunit protein uS10 (Chlorobium luteolum (strain DSM 273 / BCRC 81028 / 2530) (Pelodictyon luteolum)).